The chain runs to 353 residues: Photosystem II protein D1 (353 aa).

Threonine 2 carries the N-acetylthreonine modification. Position 2 is a phosphothreonine (threonine 2). The next 3 membrane-spanning stretches (helical) occupy residues 29–46 (YIGWFGVIMIPCLLTAIS), 118–133 (HFLLGIACYMGREWEL), and 142–156 (WIAVAYSAPVAAATA). Histidine 118 contributes to the chlorophyll a binding site. Tyrosine 126 lines the pheophytin a pocket. [CaMn4O5] cluster contacts are provided by aspartate 170 and glutamate 189. Residues 197–218 (FHMLGVAGVFGGSLFSAMHGSL) traverse the membrane as a helical segment. Histidine 198 serves as a coordination point for chlorophyll a. A quinone is bound by residues histidine 215 and 264–265 (SF). Histidine 215 serves as a coordination point for Fe cation. Histidine 272 is a binding site for Fe cation. Residues 274-288 (FLAVWPVVGIWFTAM) traverse the membrane as a helical segment. Positions 332, 333, 342, and 344 each coordinate [CaMn4O5] cluster. The propeptide occupies 345–353 (SVEAPAVNG).

It belongs to the reaction center PufL/M/PsbA/D family. PSII is composed of 1 copy each of membrane proteins PsbA, PsbB, PsbC, PsbD, PsbE, PsbF, PsbH, PsbI, PsbJ, PsbK, PsbL, PsbM, PsbT, PsbX, PsbY, PsbZ, Psb30/Ycf12, at least 3 peripheral proteins of the oxygen-evolving complex and a large number of cofactors. It forms dimeric complexes. The cofactor is The D1/D2 heterodimer binds P680, chlorophylls that are the primary electron donor of PSII, and subsequent electron acceptors. It shares a non-heme iron and each subunit binds pheophytin, quinone, additional chlorophylls, carotenoids and lipids. D1 provides most of the ligands for the Mn4-Ca-O5 cluster of the oxygen-evolving complex (OEC). There is also a Cl(-1) ion associated with D1 and D2, which is required for oxygen evolution. The PSII complex binds additional chlorophylls, carotenoids and specific lipids.. Post-translationally, tyr-161 forms a radical intermediate that is referred to as redox-active TyrZ, YZ or Y-Z. C-terminally processed by CTPA; processing is essential to allow assembly of the oxygen-evolving complex and thus photosynthetic growth.

It localises to the plastid. The protein resides in the chloroplast thylakoid membrane. The catalysed reaction is 2 a plastoquinone + 4 hnu + 2 H2O = 2 a plastoquinol + O2. Functionally, photosystem II (PSII) is a light-driven water:plastoquinone oxidoreductase that uses light energy to abstract electrons from H(2)O, generating O(2) and a proton gradient subsequently used for ATP formation. It consists of a core antenna complex that captures photons, and an electron transfer chain that converts photonic excitation into a charge separation. The D1/D2 (PsbA/PsbD) reaction center heterodimer binds P680, the primary electron donor of PSII as well as several subsequent electron acceptors. This Mesostigma viride (Green alga) protein is Photosystem II protein D1.